The primary structure comprises 388 residues: Putative membrane protein MJ1562 (388 aa).

The next 6 membrane-spanning stretches (helical) occupy residues 22 to 42 (FLML…ATNV), 219 to 239 (SQSF…IIYF), 246 to 266 (IMPL…MGLL), 273 to 293 (ATAG…IHLM), 320 to 340 (AVMA…LAPL), and 351 to 371 (ALGI…LIVI).

The protein belongs to the resistance-nodulation-cell division (RND) (TC 2.A.6) family. MmpL subfamily.

It localises to the cell membrane. The sequence is that of Putative membrane protein MJ1562 from Methanocaldococcus jannaschii (strain ATCC 43067 / DSM 2661 / JAL-1 / JCM 10045 / NBRC 100440) (Methanococcus jannaschii).